Reading from the N-terminus, the 372-residue chain is MSNQHTLLMSNLLPVGSNISTWWNFGSMLLTCLMLQITTGFFLAIHYTANINLAFSSVIHITRDVPYGWIMQNLHAISASMFFICIYIHIARGLYYGLYLNKEVWLSGTALLITLMATAFFGYVLPWGQMSFWAATVITNLLTAIPYLGTMLTTWLWGGFSINDPTLTRFFALHFILPFAIMALSSIHIILLHNEGSNNPLGTNSDIDKIPFHPYHSYKDMLMFTSMITLLFITLSFSPDLLNYPENFSKANPLVTPQHIKPEWYFLFAYGILRSIPNKLGGALALLMSVMILTTVPFTHTSYTRSMMFRPLSQILFWTLMATFITITWTASKPVEPPFISISQTTSIFYFSFFITIPLLGWTENKIMMMNN.

A run of 4 helical transmembrane segments spans residues 25–45 (FGSM…FLAI), 69–90 (WIMQ…YIHI), 105–125 (WLSG…GYVL), and 170–190 (FFAL…IHII). Heme b-binding residues include H75 and H89. Residues H174 and H188 each coordinate heme b. A ubiquinone is bound at residue H193. The next 4 helical transmembrane spans lie at 218–238 (YKDM…LSFS), 280–300 (LGGA…PFTH), 312–332 (LSQI…WTAS), and 339–358 (FISI…ITIP).

This sequence belongs to the cytochrome b family. In terms of assembly, the cytochrome bc1 complex contains 3 respiratory subunits (MT-CYB, CYC1 and UQCRFS1), 2 core proteins (UQCRC1 and UQCRC2) and probably 6 low-molecular weight proteins. Heme b is required as a cofactor.

It localises to the mitochondrion inner membrane. Its function is as follows. Component of the ubiquinol-cytochrome c reductase complex (complex III or cytochrome b-c1 complex) that is part of the mitochondrial respiratory chain. The b-c1 complex mediates electron transfer from ubiquinol to cytochrome c. Contributes to the generation of a proton gradient across the mitochondrial membrane that is then used for ATP synthesis. This is Cytochrome b (MT-CYB) from Naja annulata annulata (Banded water cobra).